A 168-amino-acid chain; its full sequence is Endoribonuclease YbeY (168 aa).

Zn(2+) contacts are provided by His-126, His-130, and His-136.

It belongs to the endoribonuclease YbeY family. Zn(2+) serves as cofactor.

The protein localises to the cytoplasm. Functionally, single strand-specific metallo-endoribonuclease involved in late-stage 70S ribosome quality control and in maturation of the 3' terminus of the 16S rRNA. The protein is Endoribonuclease YbeY of Agrobacterium fabrum (strain C58 / ATCC 33970) (Agrobacterium tumefaciens (strain C58)).